A 719-amino-acid polypeptide reads, in one-letter code: Probable disease resistance protein At4g14610 (719 aa).

Residues 25-73 (SLPENLAALQKAIEVLKTKHDDVKRRVDKEEFLGRRHRLSQVQVEIERL) are a coiled coil. Residues 114–418 (EENLVAQVEE…NELEKILGCP (305 aa)) form the NB-ARC domain. 156-163 (GMGGVGKT) provides a ligand contact to ATP. LRR repeat units follow at residues 400–421 (AVRR…PTCP), 422–444 (QLTT…FFRF), and 447–469 (NLVV…ISEV).

This sequence belongs to the disease resistance NB-LRR family.

Its function is as follows. Probable disease resistance protein. This is Probable disease resistance protein At4g14610 from Arabidopsis thaliana (Mouse-ear cress).